Here is a 378-residue protein sequence, read N- to C-terminus: Ribosomal RNA large subunit methyltransferase G (378 aa).

Belongs to the methyltransferase superfamily. RlmG family.

The protein localises to the cytoplasm. It carries out the reaction guanosine(1835) in 23S rRNA + S-adenosyl-L-methionine = N(2)-methylguanosine(1835) in 23S rRNA + S-adenosyl-L-homocysteine + H(+). Its function is as follows. Specifically methylates the guanine in position 1835 (m2G1835) of 23S rRNA. The sequence is that of Ribosomal RNA large subunit methyltransferase G from Shewanella sp. (strain W3-18-1).